The sequence spans 209 residues: SAGA-associated factor 11 homolog 1 (209 aa).

Positions 1–36 are disordered; it reads MSRTIVVKNPRTSGKDEDKAQIPSQDELPSGSSGAK. The SGF11-type zinc-finger motif lies at 120 to 141; sequence CCCPNCERMVAAVRFAPHLQTC. The span at 156 to 166 shows a compositional bias: low complexity; the sequence is LTVSSRSSSTS. Positions 156–209 are disordered; that stretch reads LTVSSRSSSTSTGGGQANEKSTDDEDWSLDSRPGKSTKNSRNKGSKKNQKNKLK. Residues 193 to 209 show a composition bias toward basic residues; it reads KNSRNKGSKKNQKNKLK.

The protein belongs to the SGF11 family. In terms of assembly, component of some SAGA transcription coactivator-HAT complexes, at least composed of Ada2b, not/nonstop, Pcaf/Gcn5, Sgf11 and Spt3. Within the SAGA complex, Sgf11, e(y)2, and not/nonstop form an additional subcomplex of SAGA called the DUB module (deubiquitination module). Interacts directly with not/nonstop. Interacts with the AMEX complex component xmas-2. Interacts with Cbp80; important for promoter recruitment of Sgf11 that is not associated with the DUB module.

Its subcellular location is the nucleus. The protein localises to the nucleoplasm. It is found in the cytoplasm. Its function is as follows. Component of the transcription regulatory histone acetylation (HAT) complex SAGA, a multiprotein complex that activates transcription by remodeling chromatin and mediating histone acetylation and deubiquitination. Within the SAGA complex, participates in a subcomplex that specifically deubiquitinates histone H2B. The SAGA complex is recruited to specific gene promoters by activators, where it is required for transcription. Required for nuclear receptor-mediated transactivation. Binds independently on SAGA to promoters in an RNA-dependent manner. Binds to mRNA and is essential for total mRNA export from the nucleus. Required to counteract heterochromatin silencing. Controls the development of neuronal connectivity in visual system by being required for accurate axon targeting in the optic lobe. Required for expression of ecdysone-induced genes such as br/broad. The protein is SAGA-associated factor 11 homolog 1 of Drosophila willistoni (Fruit fly).